The chain runs to 714 residues: Phenylalanine 2-monooxygenase precursor (714 aa).

Positions 1-15 (MGVTVIPRLLGLKDE) are cleaved as a propeptide — removed in mature form; occupies the channel of the substrate amino acid from the outside of the protein to the interior flavin ring in the precursor. Residues glycine 2, glycine 68, and 95–96 (EA) each bind FAD. A propeptide spans 108-109 (IK) (linker peptide). Residues arginine 120, 141–144 (GAMR), and valine 375 each bind FAD. Arginine 144 serves as a coordination point for substrate. Tyrosine 537 contacts substrate. Residues 652 to 653 (SD) and 660 to 662 (GWL) each bind FAD. Glycine 660 lines the substrate pocket.

This sequence belongs to the phenylalanine 2-monooxygenase family. As to quaternary structure, heterotetramer composed of 2 alpha and 2 beta subunits. The cofactor is FAD. Post-translationally, proteolytically cleaved to yield the active enzyme. Cleavage of the linkage between the 2 subunits causes reshaping of the oxygen channel and the hydrophobic environment around the flavin ring. Removal of the prosequence causes opening of the amino acid channel.

It catalyses the reaction L-phenylalanine + O2 = 2-phenylacetamide + CO2 + H2O. In terms of biological role, catalyzes both oxygenative decarboxylation and oxidative deamination, depending on the substrate used. Has high activity for L-Phe and L-Tyr, but relatively low activities for L-Met and L-Trp. L-Phe is mainly oxygenated and L-Met is mainly oxidized. This chain is Phenylalanine 2-monooxygenase precursor, found in Pseudomonas sp.